The primary structure comprises 238 residues: MTIRNVTRGLRCTLAFRTLPNALPVQASLCRVDCALLSTTCARRKSGLKADGSRADQAEAGASQSLDKQSRTLDSVRDDTLSDPYPLPFSPDIVELNSVKTRVEAGLESKWSGVNLASSQQTLNHIDAPMRVPGRDSEARETKIARLIYQTRKRGTLETDLLLSTFAKKELKNLPDAELDEFDRLLDEPDWDIFYWCTQRKPIPARWAHSFNTAGKLGHRLVAHTRNDEKAVRWMPEL.

The tract at residues 47–82 is disordered; it reads GLKADGSRADQAEAGASQSLDKQSRTLDSVRDDTLS. The span at 68–80 shows a compositional bias: basic and acidic residues; sequence KQSRTLDSVRDDT.

Belongs to the SDHAF2 family. Interacts with the flavoprotein subunit within the SDH catalytic dimer.

It localises to the mitochondrion matrix. Its function is as follows. Plays an essential role in the assembly of succinate dehydrogenase (SDH), an enzyme complex (also referred to as respiratory complex II) that is a component of both the tricarboxylic acid (TCA) cycle and the mitochondrial electron transport chain, and which couples the oxidation of succinate to fumarate with the reduction of ubiquinone (coenzyme Q) to ubiquinol. Required for flavinylation (covalent attachment of FAD) of the flavoprotein subunit of the SDH catalytic dimer. This Mycosarcoma maydis (Corn smut fungus) protein is Succinate dehydrogenase assembly factor 2, mitochondrial.